A 568-amino-acid chain; its full sequence is AT-rich interactive domain-containing protein 3B (568 aa).

Methionine 1 carries the N-acetylmethionine modification. Positions methionine 1–glutamine 22 are enriched in low complexity. The tract at residues methionine 1–tryptophan 174 is disordered. Serine 87 bears the Phosphoserine mark. Residues glutamate 88 to glutamate 107 show a composition bias toward acidic residues. Positions threonine 151–serine 160 are enriched in basic and acidic residues. Positions serine 201–leucine 374 are interaction with RB1. In terms of domain architecture, ARID spans aspartate 213–lysine 305. Serine 309 bears the Phosphoserine mark. Residue arginine 370 is modified to Asymmetric dimethylarginine. The interval serine 378–valine 403 is disordered. Positions glycine 425–valine 522 constitute an REKLES domain. Residues serine 495–glutamine 518 are interaction with ARID3A. Over residues threonine 529 to serine 559 the composition is skewed to low complexity. The segment at threonine 529–leucine 568 is disordered.

Heterodimer with ARID3A. Interacts with unphosphorylated RB1. As to expression, expressed at high levels in testis. Also expressed in prostate, thyroid and thymus.

The protein resides in the nucleus. Functionally, transcription factor involved in the production of cranial mesenchymal tissues. Favors nuclear targeting of ARID3A. In Mus musculus (Mouse), this protein is AT-rich interactive domain-containing protein 3B (Arid3b).